A 286-amino-acid chain; its full sequence is Acetylglutamate kinase (286 aa).

Substrate is bound by residues 70–71 (GG), R92, and N184.

Belongs to the acetylglutamate kinase family. ArgB subfamily.

The protein localises to the cytoplasm. The catalysed reaction is N-acetyl-L-glutamate + ATP = N-acetyl-L-glutamyl 5-phosphate + ADP. It functions in the pathway amino-acid biosynthesis; L-arginine biosynthesis; N(2)-acetyl-L-ornithine from L-glutamate: step 2/4. Functionally, catalyzes the ATP-dependent phosphorylation of N-acetyl-L-glutamate. The protein is Acetylglutamate kinase of Ruegeria sp. (strain TM1040) (Silicibacter sp.).